The sequence spans 239 residues: Purine nucleoside phosphorylase DeoD-type (239 aa).

An a purine D-ribonucleoside-binding site is contributed by His5. Phosphate is bound by residues Gly21, Arg25, Arg44, and 88-91 (RVGS). A purine D-ribonucleoside-binding positions include 180–182 (EME) and 204–205 (SD). The Proton donor role is filled by Asp205.

Belongs to the PNP/UDP phosphorylase family. In terms of assembly, homohexamer; trimer of homodimers.

It carries out the reaction a purine D-ribonucleoside + phosphate = a purine nucleobase + alpha-D-ribose 1-phosphate. The catalysed reaction is a purine 2'-deoxy-D-ribonucleoside + phosphate = a purine nucleobase + 2-deoxy-alpha-D-ribose 1-phosphate. In terms of biological role, catalyzes the reversible phosphorolytic breakdown of the N-glycosidic bond in the beta-(deoxy)ribonucleoside molecules, with the formation of the corresponding free purine bases and pentose-1-phosphate. This Salmonella agona (strain SL483) protein is Purine nucleoside phosphorylase DeoD-type.